Consider the following 68-residue polypeptide: Erythrodihydroneopterin triphosphate synthetase (68 aa).

Phosphoserine is present on Ser-66.

In Cavia porcellus (Guinea pig), this protein is Erythrodihydroneopterin triphosphate synthetase.